A 522-amino-acid polypeptide reads, in one-letter code: MNATIPQRSAKQNPVELYDLQLQALASIARTLSREQQIDELLEQVLAVLHNDLGLLHGLVTISDPEHGALQIGAIHTDSEAVAQACEGVRYRSGEGVIGNVLKHGNSVVLGRISADPRFLDRLALYDLEMPFIAVPIKNPEGNTIGVLAAQPDCRADEHMPARTRFLEIVANLLAQTVRLVVNIEDGREAADERDELRREVRGKYGFENMVVGHTPTMRRVFDQIRRVAKWNSTVLVLGESGTGKELIASAIHYKSPRAHRPFVRLNCAALPETLLESELFGHEKGAFTGAVKQRKGRFEQADGGTLFLDEIGEISPMFQAKLLRVLQEGEFERVGGNQTVRVNVRIVAATNRDLESEVEKGKFREDLYYRLNVMAIRIPPLRERTADIPELAEFLLGKIGRQQGRPLTVTDSAIRLLMSHRWPGNVRELENCLERSAIMSEDGTITRDVVSLTGVDNESPPLAAPLPEVNLADETLDDRERVIAALEQAGWVQAKAARLLGMTPRQIAYRIQTLNIHMRKI.

An a domain region spans residues 1–184 (MNATIPQRSA…AQTVRLVVNI (184 aa)). In terms of domain architecture, GAF spans 37–178 (QIDELLEQVL…IVANLLAQTV (142 aa)). Residues 211–439 (VVGHTPTMRR…LENCLERSAI (229 aa)) enclose the Sigma-54 factor interaction domain. Residues 239-246 (GESGTGKE) and 302-311 (ADGGTLFLDE) contribute to the ATP site. The tract at residues 440–479 (MSEDGTITRDVVSLTGVDNESPPLAAPLPEVNLADETLDD) is inter-domain linker. A C-terminal DNA-binding domain region spans residues 480–522 (RERVIAALEQAGWVQAKAARLLGMTPRQIAYRIQTLNIHMRKI). Positions 494-513 (QAKAARLLGMTPRQIAYRIQ) form a DNA-binding region, H-T-H motif.

As to quaternary structure, interacts with sigma-54.

Required for activation of most nif operons, which are directly involved in nitrogen fixation. This chain is Nif-specific regulatory protein (nifA), found in Azotobacter vinelandii.